A 440-amino-acid chain; its full sequence is Xaa-Pro dipeptidase (440 aa).

Residues Asp244, Asp255, His336, Glu381, and Glu420 each coordinate Mn(2+).

It belongs to the peptidase M24B family. Mn(2+) is required as a cofactor. Post-translationally, the N-terminus is blocked.

The catalysed reaction is Xaa-L-Pro dipeptide + H2O = an L-alpha-amino acid + L-proline. It carries out the reaction diisopropyl fluorophosphate + H2O = diisopropyl phosphate + fluoride + 2 H(+). Functionally, splits dipeptides with a prolyl or hydroxyprolyl residue in the C-terminal position and a nonpolar amino acid at the N-terminal position. Also catalyzes the hydrolysis of toxic organophosphorus cholinesterase-inhibiting compounds including nerve gases such as diisopropylfluorophosphate (DFP), O-isopropyl methylphosphonofluoridate (sarin), O-pinacolyl methylphosphonofluoridate (soman), and O-cyclohexyl methylphosphonofluoridate. The protein is Xaa-Pro dipeptidase (pepQ) of Pseudoalteromonas haloplanktis (Alteromonas haloplanktis).